We begin with the raw amino-acid sequence, 288 residues long: 4-hydroxy-3-methylbut-2-enyl diphosphate reductase (288 aa).

A [4Fe-4S] cluster-binding site is contributed by cysteine 12. 2 residues coordinate (2E)-4-hydroxy-3-methylbut-2-enyl diphosphate: histidine 42 and histidine 77. Residues histidine 42 and histidine 77 each contribute to the dimethylallyl diphosphate site. Isopentenyl diphosphate-binding residues include histidine 42 and histidine 77. Cysteine 99 is a binding site for [4Fe-4S] cluster. A (2E)-4-hydroxy-3-methylbut-2-enyl diphosphate-binding site is contributed by histidine 127. Histidine 127 contributes to the dimethylallyl diphosphate binding site. Residue histidine 127 coordinates isopentenyl diphosphate. Glutamate 129 functions as the Proton donor in the catalytic mechanism. Residue threonine 165 participates in (2E)-4-hydroxy-3-methylbut-2-enyl diphosphate binding. Cysteine 193 serves as a coordination point for [4Fe-4S] cluster. Positions 221, 222, 223, and 265 each coordinate (2E)-4-hydroxy-3-methylbut-2-enyl diphosphate. Dimethylallyl diphosphate is bound by residues serine 221, serine 222, asparagine 223, and serine 265. The isopentenyl diphosphate site is built by serine 221, serine 222, asparagine 223, and serine 265.

Belongs to the IspH family. Requires [4Fe-4S] cluster as cofactor.

The enzyme catalyses isopentenyl diphosphate + 2 oxidized [2Fe-2S]-[ferredoxin] + H2O = (2E)-4-hydroxy-3-methylbut-2-enyl diphosphate + 2 reduced [2Fe-2S]-[ferredoxin] + 2 H(+). It catalyses the reaction dimethylallyl diphosphate + 2 oxidized [2Fe-2S]-[ferredoxin] + H2O = (2E)-4-hydroxy-3-methylbut-2-enyl diphosphate + 2 reduced [2Fe-2S]-[ferredoxin] + 2 H(+). It participates in isoprenoid biosynthesis; dimethylallyl diphosphate biosynthesis; dimethylallyl diphosphate from (2E)-4-hydroxy-3-methylbutenyl diphosphate: step 1/1. The protein operates within isoprenoid biosynthesis; isopentenyl diphosphate biosynthesis via DXP pathway; isopentenyl diphosphate from 1-deoxy-D-xylulose 5-phosphate: step 6/6. In terms of biological role, catalyzes the conversion of 1-hydroxy-2-methyl-2-(E)-butenyl 4-diphosphate (HMBPP) into a mixture of isopentenyl diphosphate (IPP) and dimethylallyl diphosphate (DMAPP). Acts in the terminal step of the DOXP/MEP pathway for isoprenoid precursor biosynthesis. This Caldanaerobacter subterraneus subsp. tengcongensis (strain DSM 15242 / JCM 11007 / NBRC 100824 / MB4) (Thermoanaerobacter tengcongensis) protein is 4-hydroxy-3-methylbut-2-enyl diphosphate reductase.